A 273-amino-acid chain; its full sequence is Diaminopimelate epimerase (273 aa).

2 residues coordinate substrate: Asn-11 and Asn-60. Cys-69 serves as the catalytic Proton donor. Residues 70-71 (GN), Asn-181, and 199-200 (ER) contribute to the substrate site. The active-site Proton acceptor is Cys-209. 210-211 (GT) is a binding site for substrate.

It belongs to the diaminopimelate epimerase family. In terms of assembly, homodimer.

The protein resides in the cytoplasm. It carries out the reaction (2S,6S)-2,6-diaminopimelate = meso-2,6-diaminopimelate. Its pathway is amino-acid biosynthesis; L-lysine biosynthesis via DAP pathway; DL-2,6-diaminopimelate from LL-2,6-diaminopimelate: step 1/1. Functionally, catalyzes the stereoinversion of LL-2,6-diaminopimelate (L,L-DAP) to meso-diaminopimelate (meso-DAP), a precursor of L-lysine and an essential component of the bacterial peptidoglycan. The sequence is that of Diaminopimelate epimerase from Helicobacter pylori (strain HPAG1).